The primary structure comprises 333 residues: tRNA N6-adenosine threonylcarbamoyltransferase (333 aa).

His-110 and His-114 together coordinate Fe cation. Residues 133-137, Asp-166, Gly-179, Asp-183, and Asn-275 contribute to the substrate site; that span reads IVSGG. Asp-302 contributes to the Fe cation binding site.

Belongs to the KAE1 / TsaD family. Fe(2+) serves as cofactor.

Its subcellular location is the cytoplasm. The catalysed reaction is L-threonylcarbamoyladenylate + adenosine(37) in tRNA = N(6)-L-threonylcarbamoyladenosine(37) in tRNA + AMP + H(+). Functionally, required for the formation of a threonylcarbamoyl group on adenosine at position 37 (t(6)A37) in tRNAs that read codons beginning with adenine. Is involved in the transfer of the threonylcarbamoyl moiety of threonylcarbamoyl-AMP (TC-AMP) to the N6 group of A37, together with TsaE and TsaB. TsaD likely plays a direct catalytic role in this reaction. In Thermodesulfovibrio yellowstonii (strain ATCC 51303 / DSM 11347 / YP87), this protein is tRNA N6-adenosine threonylcarbamoyltransferase.